A 271-amino-acid chain; its full sequence is Formamidopyrimidine-DNA glycosylase (271 aa).

Catalysis depends on P2, which acts as the Schiff-base intermediate with DNA. The active-site Proton donor is E3. The active-site Proton donor; for beta-elimination activity is K58. Residues H91, R110, and R152 each contribute to the DNA site. The segment at 237–271 (NVYGRGGKACKKCRKPLTEKKLGQRTTVYCTHCQK) adopts an FPG-type zinc-finger fold. Residue R261 is the Proton donor; for delta-elimination activity of the active site.

Belongs to the FPG family. Monomer. It depends on Zn(2+) as a cofactor.

It catalyses the reaction Hydrolysis of DNA containing ring-opened 7-methylguanine residues, releasing 2,6-diamino-4-hydroxy-5-(N-methyl)formamidopyrimidine.. It carries out the reaction 2'-deoxyribonucleotide-(2'-deoxyribose 5'-phosphate)-2'-deoxyribonucleotide-DNA = a 3'-end 2'-deoxyribonucleotide-(2,3-dehydro-2,3-deoxyribose 5'-phosphate)-DNA + a 5'-end 5'-phospho-2'-deoxyribonucleoside-DNA + H(+). Its function is as follows. Involved in base excision repair of DNA damaged by oxidation or by mutagenic agents. Acts as a DNA glycosylase that recognizes and removes damaged bases. Has a preference for oxidized purines, such as 7,8-dihydro-8-oxoguanine (8-oxoG). Has AP (apurinic/apyrimidinic) lyase activity and introduces nicks in the DNA strand. Cleaves the DNA backbone by beta-delta elimination to generate a single-strand break at the site of the removed base with both 3'- and 5'-phosphates. The polypeptide is Formamidopyrimidine-DNA glycosylase (Saccharophagus degradans (strain 2-40 / ATCC 43961 / DSM 17024)).